Here is a 278-residue protein sequence, read N- to C-terminus: MTVLHSVDFFPSGNASVAIEPRLPQADFPEHHHDFHEIVIVEHGTGIHVFNGQPYTITGGTVCFVRAHDRHLYEHTDNLCLTNVLYRSPDRFQFLAGLNQLLPQELDGQYPSHWRVNHSVLQQVRQLVAQMEQQEGENDLPSTASREILFMQLLLLLRKSSLQENLENSASRLNLLLAWLEDHFADEVNWDAVADQFSLSLRTLHRQLKQQTGLTPQRYLNRLRLMKARHLLRHSEASVTDIAYRCGFSDSNHFSTLFRREFNWSPRDIRQGRDGFLQ.

The HTH araC/xylS-type domain occupies 174–272 (NLLLAWLEDH…NWSPRDIRQG (99 aa)). 2 consecutive DNA-binding regions (H-T-H motif) follow at residues 191-212 (DAVA…KQQT) and 239-262 (VTDI…RREF).

Binds DNA as a dimer.

It is found in the cytoplasm. In terms of biological role, activates expression of the rhaBAD and rhaT operons. This chain is HTH-type transcriptional activator RhaS, found in Shigella sonnei (strain Ss046).